Here is a 102-residue protein sequence, read N- to C-terminus: Large ribosomal subunit protein bL21 (102 aa).

It belongs to the bacterial ribosomal protein bL21 family. As to quaternary structure, part of the 50S ribosomal subunit. Contacts protein L20.

In terms of biological role, this protein binds to 23S rRNA in the presence of protein L20. The chain is Large ribosomal subunit protein bL21 from Cutibacterium acnes (strain DSM 16379 / KPA171202) (Propionibacterium acnes).